The following is a 161-amino-acid chain: Cyclic pyranopterin monophosphate synthase (161 aa).

Residues 73 to 75 (LCH) and 110 to 111 (ME) each bind substrate. D125 is a catalytic residue.

Belongs to the MoaC family. Homohexamer; trimer of dimers.

It carries out the reaction (8S)-3',8-cyclo-7,8-dihydroguanosine 5'-triphosphate = cyclic pyranopterin phosphate + diphosphate. It participates in cofactor biosynthesis; molybdopterin biosynthesis. Catalyzes the conversion of (8S)-3',8-cyclo-7,8-dihydroguanosine 5'-triphosphate to cyclic pyranopterin monophosphate (cPMP). This is Cyclic pyranopterin monophosphate synthase from Pseudomonas savastanoi pv. phaseolicola (strain 1448A / Race 6) (Pseudomonas syringae pv. phaseolicola (strain 1448A / Race 6)).